The sequence spans 125 residues: S-adenosylmethionine decarboxylase proenzyme (125 aa).

Ser-71 functions as the Schiff-base intermediate with substrate; via pyruvic acid in the catalytic mechanism. A Pyruvic acid (Ser); by autocatalysis modification is found at Ser-71. His-76 serves as the catalytic Proton acceptor; for processing activity. The active-site Proton donor; for catalytic activity is Cys-91.

This sequence belongs to the prokaryotic AdoMetDC family. Type 1 subfamily. As to quaternary structure, heterotetramer of two alpha and two beta chains arranged as a dimer of alpha/beta heterodimers. Pyruvate serves as cofactor. Is synthesized initially as an inactive proenzyme. Formation of the active enzyme involves a self-maturation process in which the active site pyruvoyl group is generated from an internal serine residue via an autocatalytic post-translational modification. Two non-identical subunits are generated from the proenzyme in this reaction, and the pyruvate is formed at the N-terminus of the alpha chain, which is derived from the carboxyl end of the proenzyme. The post-translation cleavage follows an unusual pathway, termed non-hydrolytic serinolysis, in which the side chain hydroxyl group of the serine supplies its oxygen atom to form the C-terminus of the beta chain, while the remainder of the serine residue undergoes an oxidative deamination to produce ammonia and the pyruvoyl group blocking the N-terminus of the alpha chain.

It carries out the reaction S-adenosyl-L-methionine + H(+) = S-adenosyl 3-(methylsulfanyl)propylamine + CO2. Its pathway is amine and polyamine biosynthesis; S-adenosylmethioninamine biosynthesis; S-adenosylmethioninamine from S-adenosyl-L-methionine: step 1/1. Functionally, catalyzes the decarboxylation of S-adenosylmethionine to S-adenosylmethioninamine (dcAdoMet), the propylamine donor required for the synthesis of the polyamines spermine and spermidine from the diamine putrescine. This is S-adenosylmethionine decarboxylase proenzyme from Pyrobaculum islandicum (strain DSM 4184 / JCM 9189 / GEO3).